A 330-amino-acid chain; its full sequence is Phenylalanine--tRNA ligase alpha subunit (330 aa).

E255 is a binding site for Mg(2+).

This sequence belongs to the class-II aminoacyl-tRNA synthetase family. Phe-tRNA synthetase alpha subunit type 1 subfamily. As to quaternary structure, tetramer of two alpha and two beta subunits. It depends on Mg(2+) as a cofactor.

The protein resides in the cytoplasm. The catalysed reaction is tRNA(Phe) + L-phenylalanine + ATP = L-phenylalanyl-tRNA(Phe) + AMP + diphosphate + H(+). The sequence is that of Phenylalanine--tRNA ligase alpha subunit from Acinetobacter baumannii (strain SDF).